The chain runs to 310 residues: tRNA uridine(34) hydroxylase (310 aa).

Positions 124-218 (SDPEVLLIDT…YFEEVPQEES (95 aa)) constitute a Rhodanese domain. The Cysteine persulfide intermediate role is filled by C178.

This sequence belongs to the TrhO family.

It carries out the reaction uridine(34) in tRNA + AH2 + O2 = 5-hydroxyuridine(34) in tRNA + A + H2O. Functionally, catalyzes oxygen-dependent 5-hydroxyuridine (ho5U) modification at position 34 in tRNAs. This Pseudomonas putida (strain W619) protein is tRNA uridine(34) hydroxylase.